Consider the following 291-residue polypeptide: Shikimate dehydrogenase (NADP(+)) (291 aa).

Residues 26 to 28 (SLS) and serine 73 each bind shikimate. The active-site Proton acceptor is the lysine 77. Shikimate-binding residues include asparagine 98 and aspartate 113. Residues 137–141 (GAGGA) and valine 238 contribute to the NADP(+) site. Residue tyrosine 240 participates in shikimate binding. Glycine 261 is an NADP(+) binding site.

The protein belongs to the shikimate dehydrogenase family. Homodimer.

The enzyme catalyses shikimate + NADP(+) = 3-dehydroshikimate + NADPH + H(+). It functions in the pathway metabolic intermediate biosynthesis; chorismate biosynthesis; chorismate from D-erythrose 4-phosphate and phosphoenolpyruvate: step 4/7. In terms of biological role, involved in the biosynthesis of the chorismate, which leads to the biosynthesis of aromatic amino acids. Catalyzes the reversible NADPH linked reduction of 3-dehydroshikimate (DHSA) to yield shikimate (SA). The chain is Shikimate dehydrogenase (NADP(+)) from Listeria innocua serovar 6a (strain ATCC BAA-680 / CLIP 11262).